We begin with the raw amino-acid sequence, 652 residues long: Acetyl-coenzyme A synthetase (652 aa).

CoA contacts are provided by residues 189–192, T311, and N335; that span reads RGGK. Residues 387–389, 411–416, D500, and R515 each bind ATP; these read GEP and DTWWQT. CoA is bound at residue S523. R526 contacts ATP. Residues V537, H539, and V542 each contribute to the Mg(2+) site. R584 contributes to the CoA binding site. K609 is subject to N6-acetyllysine.

This sequence belongs to the ATP-dependent AMP-binding enzyme family. It depends on Mg(2+) as a cofactor. In terms of processing, acetylated. Deacetylation by the SIR2-homolog deacetylase activates the enzyme.

The enzyme catalyses acetate + ATP + CoA = acetyl-CoA + AMP + diphosphate. Catalyzes the conversion of acetate into acetyl-CoA (AcCoA), an essential intermediate at the junction of anabolic and catabolic pathways. AcsA undergoes a two-step reaction. In the first half reaction, AcsA combines acetate with ATP to form acetyl-adenylate (AcAMP) intermediate. In the second half reaction, it can then transfer the acetyl group from AcAMP to the sulfhydryl group of CoA, forming the product AcCoA. The protein is Acetyl-coenzyme A synthetase of Rhizobium rhizogenes (strain K84 / ATCC BAA-868) (Agrobacterium radiobacter).